The chain runs to 208 residues: MFDLHKFSLRAQEIIEAGGFLYGAGWSPATSSNYSARIDDANIAITVSGKHKGRLQAQDIMVVDLQGRAVASQMKSSAETLLHTVIYDLKPNVGAVLHTHSVTATVLSRALRPNTEIVFEDYELQKAFRGVYTHEGRCVVPIFDNTQDIEALSALSVEYLKEHSDCPGYLIRGHGMYTWGETMAECLRHVEAMEFLLACELEMMRIKS.

Positions 98 and 100 each coordinate Zn(2+).

The protein belongs to the aldolase class II family. MtnB subfamily. The cofactor is Zn(2+).

It carries out the reaction 5-(methylsulfanyl)-D-ribulose 1-phosphate = 5-methylsulfanyl-2,3-dioxopentyl phosphate + H2O. The protein operates within amino-acid biosynthesis; L-methionine biosynthesis via salvage pathway; L-methionine from S-methyl-5-thio-alpha-D-ribose 1-phosphate: step 2/6. Its function is as follows. Catalyzes the dehydration of methylthioribulose-1-phosphate (MTRu-1-P) into 2,3-diketo-5-methylthiopentyl-1-phosphate (DK-MTP-1-P). This is Methylthioribulose-1-phosphate dehydratase from Hahella chejuensis (strain KCTC 2396).